The primary structure comprises 199 residues: Transgelin-3 (199 aa).

Residues 24–136 (ADLENKLVDW…RTLMALGSVA (113 aa)) form the Calponin-homology (CH) domain. Ser-163 is subject to Phosphoserine. The stretch at 174 to 199 (IGLQMGSNKGASQAGMTGYGMPRQIM) is one Calponin-like repeat. Residues 178–188 (MGSNKGASQAG) show a composition bias toward polar residues. A disordered region spans residues 178–199 (MGSNKGASQAGMTGYGMPRQIM).

The protein belongs to the calponin family. As to expression, abundant and ubiquitous expression in neurons.

This is Transgelin-3 (Tagln3) from Rattus norvegicus (Rat).